A 501-amino-acid polypeptide reads, in one-letter code: Endoglucanase 8 (501 aa).

The signal sequence occupies residues 1–35; the sequence is MKPRSSRDGHNAAAAAALLLAALVLSGDVLPAVVA. Catalysis depends on aspartate 95, which acts as the Nucleophile. An N-linked (GlcNAc...) asparagine glycan is attached at asparagine 298. Histidine 414 is an active-site residue. N-linked (GlcNAc...) asparagine glycosylation occurs at asparagine 462. Aspartate 465 is an active-site residue. Asparagine 469 is a glycosylation site (N-linked (GlcNAc...) asparagine). Glutamate 474 is an active-site residue.

It belongs to the glycosyl hydrolase 9 (cellulase E) family.

It is found in the secreted. The enzyme catalyses Endohydrolysis of (1-&gt;4)-beta-D-glucosidic linkages in cellulose, lichenin and cereal beta-D-glucans.. The chain is Endoglucanase 8 from Oryza sativa subsp. japonica (Rice).